We begin with the raw amino-acid sequence, 240 residues long: Methylthioribulose-1-phosphate dehydratase (240 aa).

Cys-99 is a binding site for substrate. His-116 and His-118 together coordinate Zn(2+). The active-site Proton donor/acceptor is the Glu-145. Zn(2+) is bound at residue His-201.

The protein belongs to the aldolase class II family. MtnB subfamily. Zn(2+) is required as a cofactor.

The protein localises to the cytoplasm. The enzyme catalyses 5-(methylsulfanyl)-D-ribulose 1-phosphate = 5-methylsulfanyl-2,3-dioxopentyl phosphate + H2O. Its pathway is amino-acid biosynthesis; L-methionine biosynthesis via salvage pathway; L-methionine from S-methyl-5-thio-alpha-D-ribose 1-phosphate: step 2/6. In terms of biological role, catalyzes the dehydration of methylthioribulose-1-phosphate (MTRu-1-P) into 2,3-diketo-5-methylthiopentyl-1-phosphate (DK-MTP-1-P). In Paracoccidioides brasiliensis (strain Pb18), this protein is Methylthioribulose-1-phosphate dehydratase.